We begin with the raw amino-acid sequence, 234 residues long: Glucosamine-6-phosphate deaminase (234 aa).

Asp-63 acts as the Proton acceptor; for enolization step in catalysis. The active-site For ring-opening step is Asn-129. Residue His-131 is the Proton acceptor; for ring-opening step of the active site. Glu-136 serves as the catalytic For ring-opening step.

It belongs to the glucosamine/galactosamine-6-phosphate isomerase family. NagB subfamily.

It catalyses the reaction alpha-D-glucosamine 6-phosphate + H2O = beta-D-fructose 6-phosphate + NH4(+). Its pathway is amino-sugar metabolism; N-acetylneuraminate degradation; D-fructose 6-phosphate from N-acetylneuraminate: step 5/5. Its function is as follows. Catalyzes the reversible isomerization-deamination of glucosamine 6-phosphate (GlcN6P) to form fructose 6-phosphate (Fru6P) and ammonium ion. This Listeria innocua serovar 6a (strain ATCC BAA-680 / CLIP 11262) protein is Glucosamine-6-phosphate deaminase.